The following is a 403-amino-acid chain: Ribosomal RNA large subunit methyltransferase I (403 aa).

The region spanning 9-88 (YPRLVLSKGR…ESIDIAFFTR (80 aa)) is the PUA domain.

It belongs to the methyltransferase superfamily. RlmI family.

Its subcellular location is the cytoplasm. The catalysed reaction is cytidine(1962) in 23S rRNA + S-adenosyl-L-methionine = 5-methylcytidine(1962) in 23S rRNA + S-adenosyl-L-homocysteine + H(+). In terms of biological role, specifically methylates the cytosine at position 1962 (m5C1962) of 23S rRNA. In Salmonella schwarzengrund (strain CVM19633), this protein is Ribosomal RNA large subunit methyltransferase I.